Consider the following 196-residue polypeptide: Glycerol-3-phosphate acyltransferase (196 aa).

A run of 5 helical transmembrane segments spans residues 1–21 (MIIF…SISG), 55–75 (IAIF…WLGT), 81–101 (PIYL…PIYF), 118–138 (AISI…VYLF), and 140–160 (YASL…WYIQ).

It belongs to the PlsY family. Probably interacts with PlsX.

The protein localises to the cell inner membrane. The enzyme catalyses an acyl phosphate + sn-glycerol 3-phosphate = a 1-acyl-sn-glycero-3-phosphate + phosphate. It functions in the pathway lipid metabolism; phospholipid metabolism. Its function is as follows. Catalyzes the transfer of an acyl group from acyl-phosphate (acyl-PO(4)) to glycerol-3-phosphate (G3P) to form lysophosphatidic acid (LPA). This enzyme utilizes acyl-phosphate as fatty acyl donor, but not acyl-CoA or acyl-ACP. The chain is Glycerol-3-phosphate acyltransferase from Blochmanniella floridana.